Consider the following 217-residue polypeptide: GTP cyclohydrolase 1 (217 aa).

The Zn(2+) site is built by Cys-109, His-112, and Cys-180.

This sequence belongs to the GTP cyclohydrolase I family. In terms of assembly, toroid-shaped homodecamer, composed of two pentamers of five dimers.

The enzyme catalyses GTP + H2O = 7,8-dihydroneopterin 3'-triphosphate + formate + H(+). Its pathway is cofactor biosynthesis; 7,8-dihydroneopterin triphosphate biosynthesis; 7,8-dihydroneopterin triphosphate from GTP: step 1/1. This Vibrio parahaemolyticus serotype O3:K6 (strain RIMD 2210633) protein is GTP cyclohydrolase 1.